The chain runs to 235 residues: Urease accessory protein UreF (235 aa).

The protein belongs to the UreF family. In terms of assembly, ureD, UreF and UreG form a complex that acts as a GTP-hydrolysis-dependent molecular chaperone, activating the urease apoprotein by helping to assemble the nickel containing metallocenter of UreC. The UreE protein probably delivers the nickel.

Its subcellular location is the cytoplasm. Functionally, required for maturation of urease via the functional incorporation of the urease nickel metallocenter. In Haemophilus influenzae (strain ATCC 51907 / DSM 11121 / KW20 / Rd), this protein is Urease accessory protein UreF.